The sequence spans 402 residues: Acyl-[acyl-carrier-protein] desaturase 3, chloroplastic (402 aa).

Disordered regions lie at residues 1–25 (MSLTGCLPPRPPCSMRRRTSGGGAS) and 38–66 (VGGIGNPTPRGKKPFAPWREVPPQVTHTL). The transit peptide at 1–32 (MSLTGCLPPRPPCSMRRRTSGGGASVSPVVVM) directs the protein to the chloroplast. Positions 139, 178, 181, 231, 264, and 267 each coordinate Fe cation.

This sequence belongs to the fatty acid desaturase type 2 family. Homodimer. Fe(2+) serves as cofactor.

It is found in the plastid. Its subcellular location is the chloroplast. It functions in the pathway lipid metabolism; fatty acid metabolism. Introduces a cis double bond in the acyl chain of an acyl-[acyl-carrier protein]. This is Acyl-[acyl-carrier-protein] desaturase 3, chloroplastic from Oryza sativa subsp. indica (Rice).